The following is a 208-amino-acid chain: V-type ATP synthase subunit D (208 aa).

It belongs to the V-ATPase D subunit family.

Functionally, produces ATP from ADP in the presence of a proton gradient across the membrane. The chain is V-type ATP synthase subunit D from Streptococcus pyogenes serotype M49 (strain NZ131).